The following is a 628-amino-acid chain: Kinesin-like protein subito (628 aa).

Residues 28 to 68 form a disordered region; it reads RFRPRPNKKMRLFDNIQESEEESFSEYSDTESEYKYQSSEA. Over residues 44–58 the composition is skewed to acidic residues; the sequence is QESEEESFSEYSDTE. In terms of domain architecture, Kinesin motor spans 87–479; the sequence is GPQVFLRLRP…LNFASIAKNI (393 aa). 169–176 provides a ligand contact to ATP; that stretch reads GTSGSGKT. Positions 509–612 form a coiled coil; the sequence is DYTKELEDEN…KNPASDTDIS (104 aa). A disordered region spans residues 596 to 628; it reads KDEIEELKNPASDTDISDDPNESKSPIEILDDD. Ser-607 carries the post-translational modification Phosphoserine. The residue at position 609 (Thr-609) is a Phosphothreonine. Ser-612 is modified (phosphoserine).

Belongs to the TRAFAC class myosin-kinesin ATPase superfamily. Kinesin family.

Its subcellular location is the cytoplasm. The protein localises to the cytoskeleton. Functionally, required during female meiosis for bipolar spindle formation in the absence of the centrosomes and chromosome homolog segregation. Also has roles in male meiosis and mitotic divisions of the early embryo. The protein is Kinesin-like protein subito (sub) of Drosophila melanogaster (Fruit fly).